The sequence spans 319 residues: Myoblast determination protein 1 (319 aa).

Residue Met1 forms a Peptide (Met-Gly) (interchain with G-Cter in ubiquitin) linkage. An N6-methyllysine; by EHMT2 modification is found at Lys104. Residues 109 to 160 form the bHLH domain; sequence DRRKAATMRERRRLSKVNEAFETLKRCTSSNPNQRLPKVEILRNAIRYIEGL. Disordered stretches follow at residues 174–221 and 266–319; these read AAAA…SGAR and APAL…YQVL. Polar residues-rich tracts occupy residues 197 to 207 and 308 to 319; these read SDASSPRSNCS and ASANPNPIYQVL.

Efficient DNA binding requires dimerization with another bHLH protein. Seems to form active heterodimers with ITF-2. Interacts with SUV39H1. Interacts with DDX5. Interacts with CHD2. Interacts with TSC22D3. Interacts with SETD3. Interacts with P-TEFB complex; promotes the transcriptional activity of MYOD1 through its CDK9-mediated phosphorylation. Interacts with CSRP3. Interacts with NUPR1. Post-translationally, phosphorylated by CDK9. This phosphorylation promotes its function in muscle differentiation. Acetylated by a complex containing EP300 and PCAF. The acetylation is essential to activate target genes. Conversely, its deacetylation by SIRT1 inhibits its function. In terms of processing, ubiquitinated on the N-terminus; which is required for proteasomal degradation. Post-translationally, methylation at Lys-104 by EHMT2/G9a inhibits myogenic activity.

The protein localises to the nucleus. Its function is as follows. Acts as a transcriptional activator that promotes transcription of muscle-specific target genes and plays a role in muscle differentiation. Together with MYF5 and MYOG, co-occupies muscle-specific gene promoter core region during myogenesis. Induces fibroblasts to differentiate into myoblasts. Interacts with and is inhibited by the twist protein. This interaction probably involves the basic domains of both proteins. This Sus scrofa (Pig) protein is Myoblast determination protein 1 (MYOD1).